A 1403-amino-acid chain; its full sequence is Centrosomal protein of 162 kDa (1403 aa).

A disordered region spans residues 18-42 (KELSDDSFENSDKTARQSKKEMKKK). Residues Ser-157 and Ser-160 each carry the phosphoserine modification. Residues 170 to 231 (QANAELTDDE…EKISVPKQEE (62 aa)) form a disordered region. Over residues 208-231 (TKDEEMPSKENSKSEKISVPKQEE) the composition is skewed to basic and acidic residues. Ser-474 and Ser-475 each carry phosphoserine. Positions 476 to 504 (EEEGAVMGKQVPYKKARSAPPLLKRKPQS) are disordered. Residues 487 to 502 (PYKKARSAPPLLKRKP) are compositionally biased toward basic residues. Coiled-coil stretches lie at residues 617-670 (KRVQ…QDNY), 698-1121 (VTGE…MLSN), 1171-1206 (EVLQENYRLKNELEGLISEKNELKMKSEAVMNQFEN), and 1235-1386 (CQNA…LHRQ).

It belongs to the CEP162 family. In terms of assembly, interacts with CEP290. Interacts with CPNE4. Interacts with alpha-tubulin.

The protein resides in the cytoplasm. Its subcellular location is the cytoskeleton. It localises to the microtubule organizing center. The protein localises to the centrosome. It is found in the centriole. The protein resides in the spindle. Its subcellular location is the nucleus. Functionally, required to promote assembly of the transition zone in primary cilia. Acts by specifically recognizing and binding the axonemal microtubule. Localizes to the distal ends of centrioles before ciliogenesis and directly binds to axonemal microtubule, thereby promoting and restricting transition zone formation specifically at the cilia base. Required to mediate CEP290 association with microtubules. The sequence is that of Centrosomal protein of 162 kDa (CEP162) from Homo sapiens (Human).